The following is a 202-amino-acid chain: LexA repressor (202 aa).

A DNA-binding region (H-T-H motif) is located at residues 29–49; the sequence is VREICEATGLKSTSTVHGHLT. Active-site for autocatalytic cleavage activity residues include S126 and K163.

This sequence belongs to the peptidase S24 family. In terms of assembly, homodimer.

The enzyme catalyses Hydrolysis of Ala-|-Gly bond in repressor LexA.. Its function is as follows. Represses a number of genes involved in the response to DNA damage (SOS response), including recA and lexA. In the presence of single-stranded DNA, RecA interacts with LexA causing an autocatalytic cleavage which disrupts the DNA-binding part of LexA, leading to derepression of the SOS regulon and eventually DNA repair. In Caldicellulosiruptor saccharolyticus (strain ATCC 43494 / DSM 8903 / Tp8T 6331), this protein is LexA repressor.